Reading from the N-terminus, the 700-residue chain is Elongation factor G (700 aa).

One can recognise a tr-type G domain in the interval 6 to 286 (HKVRNIGIMA…AVIDYLPSPL (281 aa)). GTP-binding positions include 15 to 22 (AHIDAGKT), 79 to 83 (DTPGH), and 133 to 136 (NKMD).

This sequence belongs to the TRAFAC class translation factor GTPase superfamily. Classic translation factor GTPase family. EF-G/EF-2 subfamily.

The protein resides in the cytoplasm. Its function is as follows. Catalyzes the GTP-dependent ribosomal translocation step during translation elongation. During this step, the ribosome changes from the pre-translocational (PRE) to the post-translocational (POST) state as the newly formed A-site-bound peptidyl-tRNA and P-site-bound deacylated tRNA move to the P and E sites, respectively. Catalyzes the coordinated movement of the two tRNA molecules, the mRNA and conformational changes in the ribosome. The protein is Elongation factor G of Leifsonia xyli subsp. xyli (strain CTCB07).